Reading from the N-terminus, the 177-residue chain is MEKEIMDAMAMKRALTRITYEIIERNKGVEDIVLIGIKTRGVFIAKRIAERLKQLENFDIPVGELDIAEYRDDQRNSAEPRSTKANSSLAKLDLKDRKVILIDDVLYTGRTIRAAMDAIMDINRPAQISLAVLVDRGHRELPIRADFVGKNIPTAQNEKINVFVREIDDEDVVLLEN.

The PRPP-binding signature appears at valine 99 to threonine 111.

This sequence belongs to the purine/pyrimidine phosphoribosyltransferase family. PyrR subfamily. Homodimer and homohexamer; in equilibrium.

The enzyme catalyses UMP + diphosphate = 5-phospho-alpha-D-ribose 1-diphosphate + uracil. Its function is as follows. Regulates transcriptional attenuation of the pyrimidine nucleotide (pyr) operon by binding in a uridine-dependent manner to specific sites on pyr mRNA. This disrupts an antiterminator hairpin in the RNA and favors formation of a downstream transcription terminator, leading to a reduced expression of downstream genes. Also displays a weak uracil phosphoribosyltransferase activity which is not physiologically significant. This chain is Bifunctional protein PyrR, found in Pediococcus pentosaceus (strain ATCC 25745 / CCUG 21536 / LMG 10740 / 183-1w).